Consider the following 817-residue polypeptide: Lon protease 1 (817 aa).

Residues Val18–Ile216 form the Lon N-terminal domain. Gly368–Thr375 provides a ligand contact to ATP. One can recognise a Lon proteolytic domain in the interval Glu604–Leu785. Active-site residues include Ser691 and Lys734. The disordered stretch occupies residues Glu789–Ala817.

It belongs to the peptidase S16 family. Homohexamer. Organized in a ring with a central cavity.

Its subcellular location is the cytoplasm. It carries out the reaction Hydrolysis of proteins in presence of ATP.. In terms of biological role, ATP-dependent serine protease that mediates the selective degradation of mutant and abnormal proteins as well as certain short-lived regulatory proteins. Required for cellular homeostasis and for survival from DNA damage and developmental changes induced by stress. Degrades polypeptides processively to yield small peptide fragments that are 5 to 10 amino acids long. Binds to DNA in a double-stranded, site-specific manner. The chain is Lon protease 1 from Myxococcus xanthus.